Consider the following 101-residue polypeptide: Large ribosomal subunit protein uL23 (101 aa).

Belongs to the universal ribosomal protein uL23 family. In terms of assembly, part of the 50S ribosomal subunit. Contacts protein L29, and trigger factor when it is bound to the ribosome.

Its function is as follows. One of the early assembly proteins it binds 23S rRNA. One of the proteins that surrounds the polypeptide exit tunnel on the outside of the ribosome. Forms the main docking site for trigger factor binding to the ribosome. The polypeptide is Large ribosomal subunit protein uL23 (Thiobacillus denitrificans (strain ATCC 25259 / T1)).